The sequence spans 202 residues: NADH-quinone oxidoreductase subunit C (202 aa).

The protein belongs to the complex I 30 kDa subunit family. NDH-1 is composed of 14 different subunits. Subunits NuoB, C, D, E, F, and G constitute the peripheral sector of the complex.

Its subcellular location is the cell inner membrane. It carries out the reaction a quinone + NADH + 5 H(+)(in) = a quinol + NAD(+) + 4 H(+)(out). Its function is as follows. NDH-1 shuttles electrons from NADH, via FMN and iron-sulfur (Fe-S) centers, to quinones in the respiratory chain. The immediate electron acceptor for the enzyme in this species is believed to be ubiquinone. Couples the redox reaction to proton translocation (for every two electrons transferred, four hydrogen ions are translocated across the cytoplasmic membrane), and thus conserves the redox energy in a proton gradient. The chain is NADH-quinone oxidoreductase subunit C from Hyphomonas neptunium (strain ATCC 15444).